The chain runs to 425 residues: Serine--tRNA ligase (425 aa).

A disordered region spans residues 41 to 70; it reads TERSQLQARSNQVGKQVGEKIKSGSDPKGT. Residues 44–54 show a composition bias toward polar residues; the sequence is SQLQARSNQVG. Basic and acidic residues predominate over residues 57 to 70; it reads VGEKIKSGSDPKGT. Residue 234–236 coordinates L-serine; sequence TSE. 265–267 provides a ligand contact to ATP; the sequence is RRE. L-serine is bound at residue Glu-288. Residue 352–355 coordinates ATP; it reads EISS. Ser-388 serves as a coordination point for L-serine.

The protein belongs to the class-II aminoacyl-tRNA synthetase family. Type-1 seryl-tRNA synthetase subfamily. In terms of assembly, homodimer. The tRNA molecule binds across the dimer.

Its subcellular location is the cytoplasm. It catalyses the reaction tRNA(Ser) + L-serine + ATP = L-seryl-tRNA(Ser) + AMP + diphosphate + H(+). The enzyme catalyses tRNA(Sec) + L-serine + ATP = L-seryl-tRNA(Sec) + AMP + diphosphate + H(+). Its pathway is aminoacyl-tRNA biosynthesis; selenocysteinyl-tRNA(Sec) biosynthesis; L-seryl-tRNA(Sec) from L-serine and tRNA(Sec): step 1/1. Catalyzes the attachment of serine to tRNA(Ser). Is also able to aminoacylate tRNA(Sec) with serine, to form the misacylated tRNA L-seryl-tRNA(Sec), which will be further converted into selenocysteinyl-tRNA(Sec). The sequence is that of Serine--tRNA ligase from Trichodesmium erythraeum (strain IMS101).